A 96-amino-acid chain; its full sequence is Putative pterin-4-alpha-carbinolamine dehydratase (96 aa).

This sequence belongs to the pterin-4-alpha-carbinolamine dehydratase family.

It catalyses the reaction (4aS,6R)-4a-hydroxy-L-erythro-5,6,7,8-tetrahydrobiopterin = (6R)-L-erythro-6,7-dihydrobiopterin + H2O. The sequence is that of Putative pterin-4-alpha-carbinolamine dehydratase from Prochlorococcus marinus (strain MIT 9312).